The following is a 249-amino-acid chain: Protein TIFY 10B (249 aa).

The Tify domain maps to Pro-113–Lys-148. Positions Pro-204–Gln-229 match the Jas motif. A Nuclear localization signal motif is present at residues Ala-206–Arg-213. The disordered stretch occupies residues Lys-225–Arg-249. Residues Glu-235 to Arg-249 are compositionally biased toward polar residues.

This sequence belongs to the TIFY/JAZ family. In terms of assembly, homo- and heterodimer. Interacts with COI1, MYC2, MYC3, MYC4, AFPH2/NINJA, TIFY10A/JAZ1, TIFY6B/JAZ3, TIFY11A/JAZ5, TIFY11B/JAZ6, TIFY5A/JAZ8, TIFY7/JAZ9, TIFY9/JAZ10, TIFY3A/JAZ11 and TIFY3B/JAZ12. Interacts with RHD6 and RSL1. (Microbial infection) Interacts with the pathogenic Pseudomonas syringae HopZ1a protein. Post-translationally, (Microbial infection) Acetylated by Pseudomonas syringae HopZ1a. Ubiquitinated. Targeted for degradation by the SCF(COI1) E3 ubiquitin ligase-proteasome pathway during jasmonate signaling. Expressed in cotyledons, hypocotyls, roots, sepals, petal vascular tissue and stigmas of developing flowers. Expressed in stamen filaments after jasmonic acid treatment.

The protein localises to the nucleus. Repressor of jasmonate responses. Jasmonoyl-isoleucine (JA-Ile) specifically promotes COI1-TIFY10B/JAZ2 interaction. Activated by MYC2, MYC3 and MYC4 transcription factors. Interacts with and suppresses RHD6 and RSL1 transcription factor activities to negatively regulate jasmonate-stimulated root hair development. In Arabidopsis thaliana (Mouse-ear cress), this protein is Protein TIFY 10B.